The following is a 128-amino-acid chain: uncharacterized protein (128 aa).

4 helical membrane passes run 5 to 25 (ILALLIWSSSLIVGKLTYSMM), 27 to 47 (PVLVVQVRLIIAMIIVMPLFL), 60 to 80 (QLWWLAFFNYTAVFLLQFIGL), and 87 to 107 (SAVTMIGLEPLLVVFVGHFFF). Positions 9 to 110 (LIWSSSLIVG…FVGHFFFKTK (102 aa)) constitute an EamA domain.

The protein resides in the cell membrane. This is an uncharacterized protein from Haemophilus influenzae (strain ATCC 51907 / DSM 11121 / KW20 / Rd).